We begin with the raw amino-acid sequence, 169 residues long: Podoplanin (169 aa).

The signal sequence occupies residues 1–22 (MWRVPVLLLVLGGAGLRVPAAG). At 23–138 (ASTVRPDDII…EKDGLATVTL (116 aa)) the chain is on the extracellular side. Threonine 25 carries an O-linked (GalNAc...) threonine glycan. A disordered region spans residues 37–69 (DSVVTPGTEDSVVTPGAEDNVVTDGATEEPYES). A glycan (O-linked (GalNAc...) serine) is linked at serine 38. Threonine 41 and threonine 44 each carry an O-linked (GalNAc...) threonine glycan. A glycan (O-linked (GalNAc...) serine) is linked at serine 47. O-linked (GalNAc...) threonine glycans are attached at residues threonine 50, threonine 59, threonine 63, threonine 72, threonine 76, threonine 79, threonine 83, threonine 92, threonine 96, threonine 106, threonine 107, threonine 108, threonine 113, threonine 126, and threonine 127. Residues 139–159 (VGIIVGVLLAIGFIGGIIIVV) traverse the membrane as a helical segment. A requires for dimerization and lipid rafts association region spans residues 140-144 (GIIVG). The Cytoplasmic segment spans residues 160 to 169 (ARKMSGRYSP). Positions 161-162 (RK) are requires for interaction with MSN and EZR.

This sequence belongs to the podoplanin family. In terms of assembly, homodimer. Interacts with CLEC1B; the interaction is independent of CLEC1B glycosylation and activates CLEC1B; the interaction is dependent of sialic acid on O-glycans. Interacts with CD9; this interaction is homophilic and attenuates platelet aggregation and pulmonary metastasis induced by PDPN. Interacts with LGALS8; the interaction is glycosylation-dependent; may participate in connection of the lymphatic endothelium to the surrounding extracellular matrix. Interacts with HSPA9. Interacts (via extracellular domain) with CD44; this interaction is required for PDPN-mediated directional migration and regulation of lamellipodia extension/stabilization during cell spreading and migration. Interacts (via cytoplasmic domain) with MSN and EZR; activates RHOA and promotes epithelial-mesenchymal transition. Interacts with CCL21; relocalized PDPN to the basolateral membrane. Post-translationally, extensively O-glycosylated. Contains sialic acid residues. O-glycosylation is necessary for platelet aggregation activity. Disialylated at Thr-59; sialic acid is critical for platelet-aggregating activity and for CLEC1B interaction. The N-terminus is blocked.

The protein resides in the membrane. It is found in the cell projection. The protein localises to the filopodium membrane. Its subcellular location is the lamellipodium membrane. It localises to the microvillus membrane. The protein resides in the ruffle membrane. It is found in the membrane raft. The protein localises to the apical cell membrane. Its subcellular location is the basolateral cell membrane. It localises to the invadopodium. Mediates effects on cell migration and adhesion through its different partners. During development plays a role in blood and lymphatic vessels separation by binding CLEC1B, triggering CLEC1B activation in platelets and leading to platelet activation and/or aggregation. Interaction with CD9, on the contrary, attenuates platelet aggregation and pulmonary metastasis induced by PDPN. Mediates effects on cell migration and adhesion through its different partners. Through MSN or EZR interaction promotes epithelial-mesenchymal transition (EMT) leading to ERZ phosphorylation and triggering RHOA activation leading to cell migration increase and invasiveness. Interaction with CD44 promotes directional cell migration in epithelial and tumor cells. In lymph nodes (LNs), controls fibroblastic reticular cells (FRCs) adhesion to the extracellular matrix (ECM) and contraction of the actomyosin by maintaining ERM proteins (EZR; MSN and RDX) and MYL9 activation through association with unknown transmembrane proteins. Engagement of CLEC1B by PDPN promotes FRCs relaxation by blocking lateral membrane interactions leading to reduction of ERM proteins (EZR; MSN and RDX) and MYL9 activation. Through binding with LGALS8 may participate in connection of the lymphatic endothelium to the surrounding extracellular matrix. In keratinocytes, induces changes in cell morphology showing an elongated shape, numerous membrane protrusions, major reorganization of the actin cytoskeleton, increased motility and decreased cell adhesion. Controls invadopodia stability and maturation leading to efficient degradation of the extracellular matrix (ECM) in tumor cells through modulation of RHOC activity in order to activate ROCK1/ROCK2 and LIMK1/LIMK2 and inactivation of CFL1. Required for normal lung cell proliferation and alveolus formation at birth. Does not function as a water channel or as a regulator of aquaporin-type water channels. Does not have any effect on folic acid or amino acid transport. This is Podoplanin (PDPN) from Canis lupus familiaris (Dog).